Reading from the N-terminus, the 296-residue chain is Formamidopyrimidine-DNA glycosylase (296 aa).

Pro2 acts as the Schiff-base intermediate with DNA in catalysis. The Proton donor role is filled by Glu3. Lys61 acts as the Proton donor; for beta-elimination activity in catalysis. Residues His104, Arg128, and Lys174 each contribute to the DNA site. The segment at 260-294 (HAYGQQGQACDRCGSNIIREKFANRSSHFCPRCQL) adopts an FPG-type zinc-finger fold. Arg284 functions as the Proton donor; for delta-elimination activity in the catalytic mechanism.

This sequence belongs to the FPG family. In terms of assembly, monomer. It depends on Zn(2+) as a cofactor.

The catalysed reaction is Hydrolysis of DNA containing ring-opened 7-methylguanine residues, releasing 2,6-diamino-4-hydroxy-5-(N-methyl)formamidopyrimidine.. It catalyses the reaction 2'-deoxyribonucleotide-(2'-deoxyribose 5'-phosphate)-2'-deoxyribonucleotide-DNA = a 3'-end 2'-deoxyribonucleotide-(2,3-dehydro-2,3-deoxyribose 5'-phosphate)-DNA + a 5'-end 5'-phospho-2'-deoxyribonucleoside-DNA + H(+). Involved in base excision repair of DNA damaged by oxidation or by mutagenic agents. Acts as a DNA glycosylase that recognizes and removes damaged bases. Has a preference for oxidized purines, such as 7,8-dihydro-8-oxoguanine (8-oxoG). Has AP (apurinic/apyrimidinic) lyase activity and introduces nicks in the DNA strand. Cleaves the DNA backbone by beta-delta elimination to generate a single-strand break at the site of the removed base with both 3'- and 5'-phosphates. The chain is Formamidopyrimidine-DNA glycosylase from Corynebacterium diphtheriae (strain ATCC 700971 / NCTC 13129 / Biotype gravis).